The primary structure comprises 424 residues: O-seryl-dTMP PLP-dependent decarboxylase (424 aa).

This sequence belongs to the pyridoxal-phosphate-dependent aminodecarboxylase family.

The catalysed reaction is 5-O-(L-seryl)-dTMP in DNA + H(+) = 5-aminoethoxy-methyl-dUMP in DNA + CO2. In terms of biological role, converts 5-O-serinylthymidine (O-SerT) into 5-aminoethoxy-2'-deoxymethyluridine (5-NeOmdU) as a step in the pathway leading to thymidine hypermodifications in the viral genome. As a final result of the pathway of hypermodification, 5-NeOmdU substitutes for about 40% of the thymidines in the viral DNA. These modifications probably prevent degradation of viral genome by the host restriction-modification antiviral defense system. The sequence is that of O-seryl-dTMP PLP-dependent decarboxylase from Salmonella phage ViI.